A 56-amino-acid chain; its full sequence is Venom peptide 5 (56 aa).

The signal sequence occupies residues 1-26; that stretch reads MKTASFILSFVVLLIVIITWIGEVSA. A propeptide spanning residues 27–42 is cleaved from the precursor; sequence VSEPEPVAKATAHAAA. Cysteines 49 and 54 form a disulfide.

Post-translationally, probably contains 1 disulfide bond, which may be crucial for activity, since the linear peptide without disulfide bond is inactive. As to expression, expressed by the venom gland.

Its subcellular location is the secreted. This Eumenes pomiformis (Potter wasp) protein is Venom peptide 5.